The primary structure comprises 98 residues: MKRLLFVLIALLAMLQYRLWLGDKSLADSFHLQEQIKLQQQSNAQLVARNQVLREEISDLRSGTEALEERARNELGMVKEGETFFRVVGGERGGVPEN.

At 1–3 (MKR) the chain is on the cytoplasmic side. Residues 4–21 (LLFVLIALLAMLQYRLWL) traverse the membrane as a helical segment. The Periplasmic portion of the chain corresponds to 22-98 (GDKSLADSFH…GGERGGVPEN (77 aa)). A coiled-coil region spans residues 31-74 (HLQEQIKLQQQSNAQLVARNQVLREEISDLRSGTEALEERARNE).

The protein belongs to the FtsB family. As to quaternary structure, part of a complex composed of FtsB, FtsL and FtsQ.

It localises to the cell inner membrane. Functionally, essential cell division protein. May link together the upstream cell division proteins, which are predominantly cytoplasmic, with the downstream cell division proteins, which are predominantly periplasmic. This is Cell division protein FtsB from Shewanella pealeana (strain ATCC 700345 / ANG-SQ1).